The sequence spans 622 residues: Neuronal acetylcholine receptor subunit alpha-4 (622 aa).

An N-terminal signal peptide occupies residues 1–23 (MGFLVSKGNLLLLLCASIFPAFG). Over 24-237 (HVETRAHAEE…ITYSFIIRRL (214 aa)) the chain is Extracellular. Asparagine 52 carries an N-linked (GlcNAc...) asparagine glycan. Residues valine 71 and glutamate 73 each contribute to the Ca(2+) site. Residue asparagine 102 is glycosylated (N-linked (GlcNAc...) asparagine). Disulfide bonds link cysteine 156–cysteine 170 and cysteine 220–cysteine 221. Residues 238–262 (PLFYTINLIIPCLLISCLTVLVFYL) traverse the membrane as a helical segment. Residue cysteine 266 is the site of S-palmitoyl cysteine attachment. 2 helical membrane passes run 270-288 (ITLC…LLIT) and 304-325 (YLLF…VLNV). The Cytoplasmic portion of the chain corresponds to 326-595 (HHRSPRTHTM…WKYVAMVIDR (270 aa)). 2 disordered regions span residues 380–477 (WSET…TEEG) and 497–516 (QTNG…LNEE). Low complexity predominate over residues 390–407 (TTSSSPSPQSNEPSPTSS). Composition is skewed to polar residues over residues 450–472 (SDTQ…YSPN) and 497–508 (QTNGHSSASPAS). Residues 596-614 (IFLWMFIIVCLLGTVGLFL) traverse the membrane as a helical segment.

The protein belongs to the ligand-gated ion channel (TC 1.A.9) family. Acetylcholine receptor (TC 1.A.9.1) subfamily. Alpha-4/CHRNA4 sub-subfamily. In terms of assembly, neuronal AChR is composed of two different types of subunits: alpha and beta. CHRNA4 forms heteropentameric neuronal acetylcholine receptors with CHRNB2 and CHRNB4, as well as CHRNA5 and CHRNB3 as accesory subunits. Found in two major stoichiometric forms, LS (low agonist sensitivity): (CHRNA4)3:(CHRNB2)2 and HS (high agonist sensitivity): (CHRNA4)2:(CHRNB2)3, the two stoichiometric forms differ in their unitary conductance, calcium permeability, ACh sensitivity and potentiation by divalent cation. Cells produce predominantly an (CHRNA4)3:(CHRNB2)2 nAChR. The (CHRNA4)2:(CHRNB2)3 expression is selectively up-regulated by nicotine and has lower single channel conductance and calcium permeability. In the striatum, also forms CHRNA4:CHRNA6:CHRNB2 complexes. Also found in the stoichiometric form: (CHRNA4:CHRNB2)2:CHRNB3.

The protein resides in the synaptic cell membrane. It localises to the cell membrane. The enzyme catalyses Ca(2+)(in) = Ca(2+)(out). The catalysed reaction is K(+)(in) = K(+)(out). It catalyses the reaction Na(+)(in) = Na(+)(out). With respect to regulation, activated by a myriad of ligands such as acetylcholine, cytisine, nicotine, choline and epibatidine. Channel potentiation by calcium is stoichiometry-selective, CHRNA4:CHRNB2 nACh receptor is achieved by calcium association with topographically distinct sites framed by anionic residues within the CHRNA4 subunit and between the CHRNA4 and CHRNB2 subunits. nAChR activity is inhibited by the antagonist alpha-conotoxins BuIA, PnIA, GID and MII, small disulfide-constrained peptides from cone snails. In terms of biological role, component of neuronal acetylcholine receptors (nAChRs) that function as pentameric, ligand-gated cation channels with high calcium permeability among other activities. nAChRs are excitatory neurotrasnmitter receptors formed by a collection of nAChR subunits known to mediate synaptic transmission in the nervous system and the neuromuscular junction. Each nAchR subunit confers differential attributes to channel properties, including activation, deactivation and desensitization kinetics, pH sensitivity, cation permeability, and binding to allosteric modulators. CHRNA4 forms heteropentameric neuronal acetylcholine receptors with CHRNB2 and CHRNB4, as well as CHRNA5 and CHRNB3 as accesory subunits. Is the most abundant nAChR subtype expressed in the central nervous system. Found in two major stoichiometric forms,(CHRNA4)3:(CHRNB2)2 and (CHRNA4)2:(CHRNB2)3, the two stoichiometric forms differ in their unitary conductance, calcium permeability, ACh sensitivity and potentiation by divalent cation. Involved in the modulation of calcium-dependent signaling pathways, influences the release of neurotransmitters, including dopamine, glutamate and GABA. The sequence is that of Neuronal acetylcholine receptor subunit alpha-4 (CHRNA4) from Gallus gallus (Chicken).